The primary structure comprises 284 residues: NADH-cytochrome b5 reductase 1 (284 aa).

A helical transmembrane segment spans residues lysine 7–proline 27. The region spanning asparagine 38 to glutamate 142 is the FAD-binding FR-type domain. Residues glycine 122–glycine 137 and histidine 148–leucine 180 contribute to the FAD site.

Belongs to the flavoprotein pyridine nucleotide cytochrome reductase family. In terms of assembly, monomer. Component of the 2-(3-amino-3-carboxypropyl)histidine synthase complex composed of DPH1, DPH2, KTI11/DPH3 and a NADH-dependent reductase, predominantly CBR1. Interacts with KTI11/DPH3. Interacts with STE20. FAD serves as cofactor.

The protein resides in the mitochondrion outer membrane. It carries out the reaction 2 Fe(III)-[cytochrome b5] + NADH = 2 Fe(II)-[cytochrome b5] + NAD(+) + H(+). The catalysed reaction is 2 Fe(3+)-[Dph3] + NADH = 2 Fe(2+)-[Dph3] + NAD(+) + H(+). It participates in protein modification; peptidyl-diphthamide biosynthesis. Competitively inhibited by NAD(+). Inhibited by mercurials such as p-chloromercuribenzoate (PCMB) and HgCl(2). Enzymatic activity increases under anaerobic conditions. Functionally, NADH-dependent reductase for KTI11/DPH3 and cytochrome b5. Required for the first step of diphthamide biosynthesis, a post-translational modification of histidine which occurs in elongation factor 2. DPH1 and DPH2 transfer a 3-amino-3-carboxypropyl (ACP) group from S-adenosyl-L-methionine (SAM) to a histidine residue, the reaction is assisted by a reduction system comprising KTI11/DPH3 and a NADH-dependent reductase, predominantly CBR1. By reducing KTI11/DPH3, also involved in the formation of the tRNA wobble base modification mcm5s 2U (5-methoxycarbonylmethyl-2-thiouridine), mediated by the elongator complex. The cytochrome b5/NADH cytochrome b5 reductase electron transfer system supports the catalytic activity of several sterol biosynthetic enzymes. Plays a role in bud morphology. This is NADH-cytochrome b5 reductase 1 (CBR1) from Saccharomyces cerevisiae (strain ATCC 204508 / S288c) (Baker's yeast).